The following is a 257-amino-acid chain: 3-deoxy-manno-octulosonate cytidylyltransferase (257 aa).

It belongs to the KdsB family.

The protein resides in the cytoplasm. The enzyme catalyses 3-deoxy-alpha-D-manno-oct-2-ulosonate + CTP = CMP-3-deoxy-beta-D-manno-octulosonate + diphosphate. It participates in nucleotide-sugar biosynthesis; CMP-3-deoxy-D-manno-octulosonate biosynthesis; CMP-3-deoxy-D-manno-octulosonate from 3-deoxy-D-manno-octulosonate and CTP: step 1/1. Its pathway is bacterial outer membrane biogenesis; lipopolysaccharide biosynthesis. Activates KDO (a required 8-carbon sugar) for incorporation into bacterial lipopolysaccharide in Gram-negative bacteria. In Xylella fastidiosa (strain 9a5c), this protein is 3-deoxy-manno-octulosonate cytidylyltransferase.